A 583-amino-acid chain; its full sequence is SHC-transforming protein 1 (583 aa).

Met1 is subject to N-acetylmethionine. Disordered stretches follow at residues Met1–Glu92 and Lys113–His137. Residues Glu16 to Pro44 are compositionally biased toward low complexity. Ser36 bears the Phosphoserine mark. Ser139 carries the phosphoserine modification. Lys154 is subject to N6-acetyllysine. The PID domain maps to Met156–Glu339. The segment at Glu340–Pro487 is CH1. Tyr349 and Tyr350 each carry phosphotyrosine. Positions Ala372–Cys416 are disordered. Position 427 is a phosphotyrosine (Tyr427). Position 453 is a phosphoserine (Ser453). The SH2 domain occupies Trp488 to Val579.

As to quaternary structure, interacts with CPNE3; this interaction may mediate the binding of CPNE3 with ERBB2. Interacts with the Trk receptors NTRK1, NTRK2 and NTRK3; in a phosphotyrosine-dependent manner. Interacts with the NPXY motif of tyrosine-phosphorylated IGF1R and INSR in vitro via the PID domain. Once activated, binds to GRB2. Interacts with tyrosine-phosphorylated CD3T and DDR2. Interacts with the N-terminal region of APS. Interacts with phosphorylated LRP1 and IRS4. Interacts with INPP5D/SHIP1 and INPPL1/SHIP2. Interacts with ALK, GAB2, GRB7 and KIT. Interacts with PTPN6/SHP (tyrosine phosphorylated). Identified in a complex containing FGFR4, NCAM1, CDH2, PLCG1, FRS2, SRC, SHC1, GAP43 and CTTN. Interacts with FLT4 (tyrosine-phosphorylated). Interacts with EPHB1 and GRB2; activates the MAPK/ERK cascade to regulate cell migration. Interacts with PDGFRB (tyrosine-phosphorylated). Interacts with ERBB4. Interacts with TEK/TIE2 (tyrosine-phosphorylated). Interacts with PTK2/FAK1. Interacts with CEACAM1; this interaction is CEACAM1-phosphorylation-dependent and mediates interaction with EGFR or INSR resulting in decrease coupling of SHC1 to the MAPK3/ERK1-MAPK1/ERK2 pathway. Interacts (via PID domain) with PEAK1 (when phosphorylated). Found in a complex with PPP1CA, PPP1CC, SHC1 and PEAK1. Post-translationally, phosphorylated by activated epidermal growth factor receptor. Phosphorylated in response to KIT signaling. Tyrosine phosphorylated in response to FLT3 and FLT4 signaling and by ligand-activated ALK. Tyrosine phosphorylated by ligand-activated PDGFRB. Tyrosine phosphorylated by TEK/TIE2. May be tyrosine phosphorylated by activated PTK2/FAK1. Tyrosine phosphorylated by activated PTK2B/PYK2. Dephosphorylation by PTPN2 may regulate interaction with GRB2.

It localises to the cytoplasm. It is found in the cell junction. Its subcellular location is the focal adhesion. Signaling adapter that couples activated growth factor receptors to signaling pathways. Participates in a signaling cascade initiated by activated KIT and KITLG/SCF. Participates in signaling downstream of the angiopoietin receptor TEK/TIE2, and plays a role in the regulation of endothelial cell migration and sprouting angiogenesis. The chain is SHC-transforming protein 1 (SHC1) from Pongo abelii (Sumatran orangutan).